Consider the following 426-residue polypeptide: tRNA(Ile)-lysidine synthase (426 aa).

21-26 (SGGLDS) is a binding site for ATP.

It belongs to the tRNA(Ile)-lysidine synthase family.

The protein localises to the cytoplasm. It catalyses the reaction cytidine(34) in tRNA(Ile2) + L-lysine + ATP = lysidine(34) in tRNA(Ile2) + AMP + diphosphate + H(+). Functionally, ligates lysine onto the cytidine present at position 34 of the AUA codon-specific tRNA(Ile) that contains the anticodon CAU, in an ATP-dependent manner. Cytidine is converted to lysidine, thus changing the amino acid specificity of the tRNA from methionine to isoleucine. The sequence is that of tRNA(Ile)-lysidine synthase from Enterobacter sp. (strain 638).